We begin with the raw amino-acid sequence, 367 residues long: Leu/Ile/Val-binding protein (367 aa).

Residues 1 to 23 (MNMKGKALLAGCIALSLSNMAFA) form the signal peptide. A disulfide bridge links Cys76 with Cys101.

The protein belongs to the leucine-binding protein family.

The protein localises to the periplasm. In terms of biological role, this protein is a component of the leucine, isoleucine, valine, (threonine) transport system, which is one of the two periplasmic binding protein-dependent transport systems of the high-affinity transport of the branched-chain amino acids. The protein is Leu/Ile/Val-binding protein (livJ) of Citrobacter freundii.